Reading from the N-terminus, the 445-residue chain is Deoxyribodipyrimidine photo-lyase (445 aa).

Positions S20–V148 constitute a Photolyase/cryptochrome alpha/beta domain. R239 contributes to the DNA binding site.

Belongs to the DNA photolyase class-2 family. It depends on FAD as a cofactor. Coenzyme F420-(gamma-Glu)n is required as a cofactor.

The catalysed reaction is cyclobutadipyrimidine (in DNA) = 2 pyrimidine residues (in DNA).. Its function is as follows. Involved in repair of UV radiation-induced DNA damage. Catalyzes the light-dependent monomerization (300-600 nm) of cyclobutyl pyrimidine dimers (in cis-syn configuration), which are formed between adjacent bases on the same DNA strand upon exposure to ultraviolet radiation. This Methanothermobacter thermautotrophicus (strain ATCC 29096 / DSM 1053 / JCM 10044 / NBRC 100330 / Delta H) (Methanobacterium thermoautotrophicum) protein is Deoxyribodipyrimidine photo-lyase (phr).